The following is a 543-amino-acid chain: Probable protein kinase UbiB (543 aa).

The Protein kinase domain maps to 123–501 (DFDQQALASA…RVRQGQSRYL (379 aa)). ATP contacts are provided by residues 129–137 (LASASIAQV) and lysine 152. Catalysis depends on aspartate 287, which acts as the Proton acceptor. The next 2 membrane-spanning stretches (helical) occupy residues 498-518 (SRYL…LLSG) and 519-539 (DVEV…VIGW).

It belongs to the ABC1 family. UbiB subfamily.

It localises to the cell inner membrane. The protein operates within cofactor biosynthesis; ubiquinone biosynthesis [regulation]. In terms of biological role, is probably a protein kinase regulator of UbiI activity which is involved in aerobic coenzyme Q (ubiquinone) biosynthesis. The polypeptide is Probable protein kinase UbiB (Serratia proteamaculans (strain 568)).